Here is a 349-residue protein sequence, read N- to C-terminus: Fe(3+) ions import ATP-binding protein FbpC (349 aa).

In terms of domain architecture, ABC transporter spans 4–236 (LELHHIGKSY…PVDEPTATFL (233 aa)). ATP is bound at residue 36 to 43 (GPSGSGKT).

This sequence belongs to the ABC transporter superfamily. Fe(3+) ion importer (TC 3.A.1.10) family. As to quaternary structure, the complex is composed of two ATP-binding proteins (FbpC), two transmembrane proteins (FbpB) and a solute-binding protein (FbpA).

Its subcellular location is the cell inner membrane. It catalyses the reaction Fe(3+)(out) + ATP + H2O = Fe(3+)(in) + ADP + phosphate + H(+). Functionally, part of the ABC transporter complex FbpABC involved in Fe(3+) ions import. Responsible for energy coupling to the transport system. This Yersinia pseudotuberculosis serotype I (strain IP32953) protein is Fe(3+) ions import ATP-binding protein FbpC.